A 205-amino-acid polypeptide reads, in one-letter code: Myb-related protein 305 (205 aa).

HTH myb-type domains lie at 10–62 (DVEV…LNYL) and 63–117 (RPDV…QKHM). 2 consecutive DNA-binding regions (H-T-H motif) follow at residues 38 to 62 (WNSL…LNYL) and 90 to 113 (WSKI…RTRI).

Expressed only in flowers.

The protein resides in the nucleus. Its function is as follows. Transcription factor. This Antirrhinum majus (Garden snapdragon) protein is Myb-related protein 305.